A 577-amino-acid polypeptide reads, in one-letter code: Pentatricopeptide repeat-containing protein At1g63400 (577 aa).

PPR repeat units follow at residues 49–83 (GSGDYREILRNGLHSMKLDDAIGLFGGMVKSRPLP), 84–118 (SIFEFNKLLSAIAKMKKFDLVISLGEKMQRLGISH), 119–153 (NLYTYNILINCFCRRSQISLALALLGKMMKLGYEP), 154–188 (SIVTLSSLLNGYCHGKRISDAVALVDQMVEMGYRP), 189–223 (DTITFTTLIHGLFLHNKASEAVALVDRMVQRGCQP), 224–258 (NLVTYGVVVNGLCKRGDIDLAFNLLNKMEAAKIEA), 259–293 (NVVIYSTVIDSLCKYRHEDDALNLFTEMENKGVRP), 294–328 (NVITYSSLISCLCNYERWSDASRLLSDMIERKINP), 329–363 (NVVTFNALIDAFVKEGKLVEAEKLYDEMIKRSIDP), 364–398 (DIFTYSSLINGFCMHDRLDEAKHMFELMISKDCFP), 399–433 (NVVTYNTLINGFCKAKRIDEGVELFREMSQRGLVG), 434–468 (NTVTYTTLIHGFFQARDCDNAQMVFKQMVSDGVHP), 469–503 (NIMTYNTLLDGLCKNGKLEKAMVVFEYLQRSKMEP), 504–538 (TIYTYNIMIEGMCKAGKVEDGWDLFCSLSLKGVKP), and 539–573 (DVIIYNTMISGFCRKGLKEEADALFRKMREDGPLP).

The protein belongs to the PPR family. P subfamily.

The sequence is that of Pentatricopeptide repeat-containing protein At1g63400 from Arabidopsis thaliana (Mouse-ear cress).